The sequence spans 266 residues: F-box only protein 50 (266 aa).

Residues 1–16 (MEKTQDRDTLSGRMEA) show a composition bias toward basic and acidic residues. The tract at residues 1–53 (MEKTQDRDTLSGRMEAEGSLNSEELPPHPQSPPPPPSPRSPTSPVTPELPQPN) is disordered. Residues 27 to 41 (PHPQSPPPPPSPRSP) show a composition bias toward pro residues. Phosphoserine is present on residues Ser31, Ser37, Ser40, and Ser43. Thr46 carries the phosphothreonine modification. The FBA domain occupies 86–264 (LFLERPLYRN…VTDSSVSVQL (179 aa)).

Strongly expressed in kidney. Weakly expressed in stomach, colon, duodenum and prostate.

It is found in the cytoplasm. Functionally, promotes cell proliferation. The protein is F-box only protein 50 (Nccrp1) of Mus musculus (Mouse).